The sequence spans 876 residues: Alanine--tRNA ligase (876 aa).

Zn(2+) is bound by residues His-565, His-569, Cys-667, and His-671.

This sequence belongs to the class-II aminoacyl-tRNA synthetase family. It depends on Zn(2+) as a cofactor.

It is found in the cytoplasm. It carries out the reaction tRNA(Ala) + L-alanine + ATP = L-alanyl-tRNA(Ala) + AMP + diphosphate. Functionally, catalyzes the attachment of alanine to tRNA(Ala) in a two-step reaction: alanine is first activated by ATP to form Ala-AMP and then transferred to the acceptor end of tRNA(Ala). Also edits incorrectly charged Ser-tRNA(Ala) and Gly-tRNA(Ala) via its editing domain. The polypeptide is Alanine--tRNA ligase (Staphylococcus aureus (strain MSSA476)).